The chain runs to 125 residues: Linear element protein rec27 (125 aa).

The stretch at 45 to 104 forms a coiled coil; sequence KTNIENEKKAFIKDVSQVQQKIKEFEIQKANQIKQLNEEKLSIEARKQQLEIEIRNQLLQ.

As to quaternary structure, component of linear elements (LinEs), which are similar to synaptonemal complexes, at least composed of rec27, rec25, rec10 and mug20.

It is found in the cytoplasm. It localises to the nucleus. The protein resides in the chromosome. Its function is as follows. During meiotic DNA recombination, binds to and activates DNA double-strand break (DSB) hotspot sites. The protein is Linear element protein rec27 of Schizosaccharomyces pombe (strain 972 / ATCC 24843) (Fission yeast).